The following is a 512-amino-acid chain: Plastidal glycolate/glycerate translocator 1, chloroplastic (512 aa).

Residues 1-76 (MATLLATPIF…MNFERKLSVQ (76 aa)) constitute a chloroplast transit peptide. At alanine 77 the chain carries N-acetylalanine. A run of 12 helical transmembrane segments spans residues 93-113 (VIAISHLLVSLGIILAADYFL), 127-147 (ALFGMFCIFSVLMIFDSVVPA), 160-180 (FLFIQRWLPLFYVPSLVVLPL), 195-215 (YIVAGGWLASLCVAGYTAIAV), 238-258 (LELWSWSGIFVVSFVGALFYP), 270-290 (PFLLSSTVLGYIVGSGLPSSI), 293-313 (VFHPIICCALSAVLAALAFGY), 336-356 (AGDILMGFLGSVILSFAFSMF), 367-387 (AEIFTSVIVSTVFSLYSTALV), 398-418 (TVSILPRCITVALALSIVSLF), 425-445 (LTAAVVVVTGLIGANFVQVVL), and 480-500 (LPFCAIAYALTGIFGSLLCSV).

The protein belongs to the CidB/LrgB family. In terms of tissue distribution, expressed in leaves, stems and flowers, but not in roots.

It localises to the plastid. The protein localises to the chloroplast membrane. Glycolate/glycerate transporter required for photorespiration. The chain is Plastidal glycolate/glycerate translocator 1, chloroplastic (PLGG1) from Arabidopsis thaliana (Mouse-ear cress).